We begin with the raw amino-acid sequence, 173 residues long: Transcriptional repressor NrdR (173 aa).

A zinc finger lies at 3-34 (CPYCGSLDTQVKDSRPTEDNTAIRRRRVCPDC). In terms of domain architecture, ATP-cone spans 49–139 (LMVVKRSGRR…VYRNFREARD (91 aa)).

The protein belongs to the NrdR family. Zn(2+) is required as a cofactor.

Its function is as follows. Negatively regulates transcription of bacterial ribonucleotide reductase nrd genes and operons by binding to NrdR-boxes. The polypeptide is Transcriptional repressor NrdR (Azorhizobium caulinodans (strain ATCC 43989 / DSM 5975 / JCM 20966 / LMG 6465 / NBRC 14845 / NCIMB 13405 / ORS 571)).